The following is a 165-amino-acid chain: Ribosome maturation factor RimM (165 aa).

In terms of domain architecture, PRC barrel spans 89-161; it reads EADTHYIVDL…KIVVKPVRQW (73 aa).

Belongs to the RimM family. Binds ribosomal protein uS19.

The protein resides in the cytoplasm. In terms of biological role, an accessory protein needed during the final step in the assembly of 30S ribosomal subunit, possibly for assembly of the head region. Essential for efficient processing of 16S rRNA. May be needed both before and after RbfA during the maturation of 16S rRNA. It has affinity for free ribosomal 30S subunits but not for 70S ribosomes. This Clostridium botulinum (strain Alaska E43 / Type E3) protein is Ribosome maturation factor RimM.